A 184-amino-acid chain; its full sequence is uncharacterized protein (184 aa).

The 64-residue stretch at 72–135 (RKSQAILLIG…GIALGSAVKV (64 aa)) folds into the 4Fe-4S domain. Residues C92, C95, C100, and C118 each contribute to the [4Fe-4S] cluster site.

It depends on [4Fe-4S] cluster as a cofactor.

This is an uncharacterized protein from Archaeoglobus fulgidus (strain ATCC 49558 / DSM 4304 / JCM 9628 / NBRC 100126 / VC-16).